The sequence spans 268 residues: Proenkephalin-A (268 aa).

A signal peptide spans 1 to 24 (MARFLRLCTWLLALGSCLLATVQA). 3 disulfides stabilise this stretch: Cys26/Cys48, Cys30/Cys52, and Cys33/Cys65. Residues 163 to 184 (TGDNRAKDSHQQESTNNDEDMS) form a disordered region. 2 consecutive propeptides follow at residues 197-208 (SPQLEDEAKELQ) and 218-228 (VGRPEWWMDYQ). A Phosphoserine modification is found at Ser252.

Belongs to the opioid neuropeptide precursor family. In terms of processing, proenkephalin-A is cleaved by CTSL to generate Met-enkephalin. Processed and degraded by ACE. Post-translationally, probably cleaved by ACE. In terms of processing, processed by ACE to generate Met-enkephalin in the nucleus accumbens of the brain. The N-terminal domain contains 6 conserved cysteines thought to be involved in disulfide bonding and/or processing. In terms of tissue distribution, spermatogenic and somatic cells.

The protein resides in the cytoplasmic vesicle. Its subcellular location is the secretory vesicle. It localises to the chromaffin granule lumen. It is found in the secreted. Functionally, neuropeptide that competes with and mimic the effects of opiate drugs. They play a role in a number of physiologic functions, including pain perception and responses to stress. In terms of biological role, met-enkephalin-Arg-Phe neuropeptide acts as a strong ligand of Mu-type opioid receptor OPRM1. Met-enkephalin-Arg-Phe-binding to OPRM1 in the nucleus accumbens of the brain increases activation of OPRM1, leading to long-term synaptic depression of glutamate release. Its function is as follows. Increases glutamate release in the striatum and decreases GABA concentration in the striatum. Increases glutamate release in the striatum. In Mus musculus (Mouse), this protein is Proenkephalin-A (Penk).